Consider the following 509-residue polypeptide: Maturase K (509 aa).

Belongs to the intron maturase 2 family. MatK subfamily.

The protein localises to the plastid. Its subcellular location is the chloroplast. In terms of biological role, usually encoded in the trnK tRNA gene intron. Probably assists in splicing its own and other chloroplast group II introns. The chain is Maturase K from Vachellia farnesiana (Sweet acacia).